The chain runs to 79 residues: Sulfur carrier protein TusA (79 aa).

Cys17 (cysteine persulfide intermediate) is an active-site residue.

It belongs to the sulfur carrier protein TusA family.

It is found in the cytoplasm. Sulfur carrier protein which probably makes part of a sulfur-relay system. This chain is Sulfur carrier protein TusA, found in Haemophilus influenzae (strain 86-028NP).